The chain runs to 565 residues: Ubiquitin carboxyl-terminal hydrolase 39 (565 aa).

2 stretches are compositionally biased toward basic and acidic residues: residues 1–21 (MSGRSKRESRGSTRGKRESES) and 28–39 (VKRERDREREPE). Disordered regions lie at residues 1–61 (MSGR…SARE) and 75–96 (EREVDEDSEPEREVRAKNGRVD). Serine 46 bears the Phosphoserine mark. Residue lysine 51 forms a Glycyl lysine isopeptide (Lys-Gly) (interchain with G-Cter in SUMO2) linkage. Serine 82 carries the phosphoserine modification. Over residues 85-96 (EREVRAKNGRVD) the composition is skewed to basic and acidic residues. The UBP-type; degenerate zinc-finger motif lies at 103 to 200 (RHCPYLDTIN…YVLKPTFTKQ (98 aa)). Residues cysteine 136, cysteine 139, histidine 155, and histidine 161 each coordinate Zn(2+). A USP domain is found at 225–555 (VGLNNIKAND…EAYIQIWKRR (331 aa)).

The protein belongs to the peptidase C19 family. The U4/U6-U5 tri-snRNP complex is a building block of the precatalytic spliceosome (spliceosome B complex). Component of the U4/U6-U5 tri-snRNP complex composed of the U4, U6 and U5 snRNAs and at least PRPF3, PRPF4, PRPF6, PRPF8, PRPF31, SNRNP200, TXNL4A, SNRNP40, SNRPB, SNRPD1, SNRPD2, SNRPD3, SNRPE, SNRPF, SNRPG, DDX23, CD2BP2, PPIH, SNU13, EFTUD2, SART1 and USP39, plus LSM2, LSM3, LSM4, LSM5, LSM6, LSM7 and LSM8.

The protein localises to the nucleus. It carries out the reaction Thiol-dependent hydrolysis of ester, thioester, amide, peptide and isopeptide bonds formed by the C-terminal Gly of ubiquitin (a 76-residue protein attached to proteins as an intracellular targeting signal).. Deubiquitinating enzyme that plays a role in many cellular processes including cellular antiviral response, epithelial morphogenesis, DNA repair or B-cell development. Plays a role in pre-mRNA splicing as a component of the U4/U6-U5 tri-snRNP, one of the building blocks of the precatalytic spliceosome. Specifically regulates immunoglobulin gene rearrangement in a spliceosome-dependent manner, which involves modulating chromatin interactions at the Igh locus and therefore plays an essential role in B-cell development. Regulates AURKB mRNA levels, and thereby plays a role in cytokinesis and in the spindle checkpoint. Regulates apoptosis and G2/M cell cycle checkpoint in response to DNA damage by deubiquitinating and stabilizing CHK2. Also plays an important role in DNA repair by controlling the recruitment of XRCC4/LIG4 to DNA double-strand breaks for non-homologous end-joining repair. Participates in antiviral activity by affecting the type I IFN signaling by stabilizing STAT1 and decreasing its 'Lys-6'-linked ubiquitination. Contributes to non-canonical Wnt signaling during epidermal differentiation. Acts as a negative regulator NF-kappa-B activation through deubiquitination of 'Lys-48'-linked ubiquitination of NFKBIA. The chain is Ubiquitin carboxyl-terminal hydrolase 39 (USP39) from Pongo abelii (Sumatran orangutan).